The primary structure comprises 252 residues: 2-C-methyl-D-erythritol 4-phosphate cytidylyltransferase (252 aa).

The protein belongs to the IspD/TarI cytidylyltransferase family. IspD subfamily.

It catalyses the reaction 2-C-methyl-D-erythritol 4-phosphate + CTP + H(+) = 4-CDP-2-C-methyl-D-erythritol + diphosphate. It functions in the pathway isoprenoid biosynthesis; isopentenyl diphosphate biosynthesis via DXP pathway; isopentenyl diphosphate from 1-deoxy-D-xylulose 5-phosphate: step 2/6. Its function is as follows. Catalyzes the formation of 4-diphosphocytidyl-2-C-methyl-D-erythritol from CTP and 2-C-methyl-D-erythritol 4-phosphate (MEP). This chain is 2-C-methyl-D-erythritol 4-phosphate cytidylyltransferase, found in Chlorobium phaeobacteroides (strain BS1).